Reading from the N-terminus, the 110-residue chain is uncharacterized protein (110 aa).

This is an uncharacterized protein from Yersinia enterocolitica.